Here is a 29-residue protein sequence, read N- to C-terminus: Cycloviolacin-O16 (29 aa).

Residues 1 to 29 (GLPCGETCFTGKCYTPGCSCSYPICKKIN) constitute a cross-link (cyclopeptide (Gly-Asn)). 3 cysteine pairs are disulfide-bonded: Cys4-Cys18, Cys8-Cys20, and Cys13-Cys25.

In terms of processing, this is a cyclic peptide.

In terms of biological role, probably participates in a plant defense mechanism. This Viola odorata (Sweet violet) protein is Cycloviolacin-O16.